Reading from the N-terminus, the 867-residue chain is Leucine--tRNA ligase (867 aa).

A 'HIGH' region motif is present at residues 42–52 (PYPSGNLHMGH). Positions 625-629 (KMSKS) match the 'KMSKS' region motif. Lys628 contacts ATP.

Belongs to the class-I aminoacyl-tRNA synthetase family.

Its subcellular location is the cytoplasm. It catalyses the reaction tRNA(Leu) + L-leucine + ATP = L-leucyl-tRNA(Leu) + AMP + diphosphate. The sequence is that of Leucine--tRNA ligase from Blochmanniella floridana.